We begin with the raw amino-acid sequence, 689 residues long: uncharacterized protein (689 aa).

Residue Ser566 participates in substrate binding. The Proton acceptor role is filled by Tyr579.

It belongs to the short-chain dehydrogenases/reductases (SDR) family.

This is an uncharacterized protein from Bacillus subtilis (strain 168).